A 96-amino-acid polypeptide reads, in one-letter code: Invertase 7 (96 aa).

Positions 1–19 (MLLQAFIFLLAGFAAKISA) are cleaved as a signal peptide. Residue N23 is glycosylated (N-linked (GlcNAc...) asparagine). Residues 39–42 (WMND) and Q60 each bind substrate. D42 is an active-site residue. N64 and N76 each carry an N-linked (GlcNAc...) asparagine glycan.

Belongs to the glycosyl hydrolase 32 family.

It carries out the reaction Hydrolysis of terminal non-reducing beta-D-fructofuranoside residues in beta-D-fructofuranosides.. This is Invertase 7 (SUC7) from Saccharomyces cerevisiae (Baker's yeast).